Reading from the N-terminus, the 509-residue chain is 2-isopropylmalate synthase (509 aa).

In terms of domain architecture, Pyruvate carboxyltransferase spans 5–267; sequence IQIFDTTLRD…QTALNLEETK (263 aa). Residues aspartate 14, histidine 202, histidine 204, and asparagine 238 each coordinate Mn(2+). The interval 391 to 509 is regulatory domain; the sequence is KLETLQLQYV…AAENVEKVGN (119 aa).

Belongs to the alpha-IPM synthase/homocitrate synthase family. LeuA type 1 subfamily. In terms of assembly, homodimer. It depends on Mn(2+) as a cofactor.

The protein localises to the cytoplasm. It carries out the reaction 3-methyl-2-oxobutanoate + acetyl-CoA + H2O = (2S)-2-isopropylmalate + CoA + H(+). The protein operates within amino-acid biosynthesis; L-leucine biosynthesis; L-leucine from 3-methyl-2-oxobutanoate: step 1/4. In terms of biological role, catalyzes the condensation of the acetyl group of acetyl-CoA with 3-methyl-2-oxobutanoate (2-ketoisovalerate) to form 3-carboxy-3-hydroxy-4-methylpentanoate (2-isopropylmalate). This Staphylococcus aureus (strain Mu3 / ATCC 700698) protein is 2-isopropylmalate synthase.